The chain runs to 200 residues: uncharacterized protein (200 aa).

Functionally, involved in osmoadaptation. This is an uncharacterized protein from Emericella nidulans (strain FGSC A4 / ATCC 38163 / CBS 112.46 / NRRL 194 / M139) (Aspergillus nidulans).